The chain runs to 696 residues: DNA ligase (696 aa).

NAD(+)-binding positions include 36-40 (DAVYD), 85-86 (SL), and E124. K126 functions as the N6-AMP-lysine intermediate in the catalytic mechanism. R147, E184, K308, and K332 together coordinate NAD(+). The Zn(2+) site is built by C426, C429, C444, and C449. The 79-residue stretch at 618–696 (QRTVSLQGQT…EEELLKLLAS (79 aa)) folds into the BRCT domain.

The protein belongs to the NAD-dependent DNA ligase family. LigA subfamily. It depends on Mg(2+) as a cofactor. Mn(2+) is required as a cofactor.

The catalysed reaction is NAD(+) + (deoxyribonucleotide)n-3'-hydroxyl + 5'-phospho-(deoxyribonucleotide)m = (deoxyribonucleotide)n+m + AMP + beta-nicotinamide D-nucleotide.. In terms of biological role, DNA ligase that catalyzes the formation of phosphodiester linkages between 5'-phosphoryl and 3'-hydroxyl groups in double-stranded DNA using NAD as a coenzyme and as the energy source for the reaction. It is essential for DNA replication and repair of damaged DNA. The sequence is that of DNA ligase from Prochlorococcus marinus (strain MIT 9303).